The chain runs to 77 residues: MPKRVLQGVVISSKADKTVTVKVERKFKHPIYKKFVKVSKKYAAHDSENRYQEGDKVSIIESRPISKTKTWIVVNGK.

The protein belongs to the universal ribosomal protein uS17 family. As to quaternary structure, part of the 30S ribosomal subunit.

One of the primary rRNA binding proteins, it binds specifically to the 5'-end of 16S ribosomal RNA. In Rickettsia canadensis (strain McKiel), this protein is Small ribosomal subunit protein uS17.